Consider the following 522-residue polypeptide: Occludin (522 aa).

The disordered stretch occupies residues 1-20; sequence MSSRPLESPPPYRPDEFKPN. Topologically, residues 1 to 66 are cytoplasmic; the sequence is MSSRPLESPP…KWTSPPGVIR (66 aa). Residues 60-269 form the MARVEL domain; the sequence is SPPGVIRILS…IIFFAVKTRR (210 aa). Residues 67–89 traverse the membrane as a helical segment; it reads ILSMLIIVMCIAIFACVASTLAW. The Extracellular segment spans residues 90–135; it reads DRGYGTSLLGGSVGYPYGGSGFGSYGSGYGYGYGYGYGYGGYTDPR. Residues 136–160 form a helical membrane-spanning segment; that stretch reads AAKGFMLAMAAFCFIAALVIFVTSV. Over 161-170 the chain is Cytoplasmic; sequence IRSEMSRTRR. A helical transmembrane segment spans residues 171–195; sequence YYLSVIIVSAILGIMVFIATIVYIM. Over 196 to 243 the chain is Extracellular; that stretch reads GVNPTAQSSGSLYGSQIYALCNQFYTPAATGLYVDQYLYHYCVVDPQE. A disulfide bond links cysteine 216 and cysteine 237. A helical membrane pass occupies residues 244–265; it reads AIAIVLGFMIIVAFALIIFFAV. Residues 266–522 are Cytoplasmic-facing; the sequence is KTRRKMDRYD…MVGDYDRQKT (257 aa). Residue serine 302 is modified to Phosphoserine. Threonine 305 is subject to Phosphothreonine. A phosphoserine mark is found at serine 313, serine 321, and serine 340. Residues 360–407 form a disordered region; sequence VDDFRQPRYSSGGNFETPSKRAPAKGRAGRSKRTEQDHYETDYTTGGE. Residues 367 to 376 are compositionally biased toward polar residues; sequence RYSSGGNFET. Residue tyrosine 368 is modified to Phosphotyrosine. Phosphoserine is present on residues serine 369 and serine 370. Positions 381–390 are enriched in basic residues; it reads APAKGRAGRS. Basic and acidic residues predominate over residues 391 to 400; the sequence is KRTEQDHYET. Phosphotyrosine is present on residues tyrosine 398 and tyrosine 402. Phosphothreonine; by PKC/PRKCH occurs at positions 403 and 404. Serine 408 is subject to Phosphoserine. The OCEL domain maps to 414–522; sequence EDWIREYPPI…MVGDYDRQKT (109 aa). Residues 426–489 adopt a coiled-coil conformation; that stretch reads DQQRQLYKRN…EYNRLKQVKG (64 aa). At serine 490 the chain carries Phosphoserine.

This sequence belongs to the ELL/occludin family. In terms of assembly, interacts with TJP1/ZO1. Interacts with VAPA. Interacts with CLDN1, CLDN6, CLDN9, CLDN11, CLDN12 and CLDN17. Interacts with PLSCR1. Interacts with LSR, ILDR1 and ILDR2. Interacts with TJP2/ZO2. Post-translationally, dephosphorylated by PTPRJ. The tyrosine phosphorylation on Tyr-398 and Tyr-402 reduces its ability to interact with TJP1. Phosphorylation at Ser-490 also attenuates the interaction with TJP1. In terms of processing, (Microbial infection) Cleaved by S.pyogenes SpeB protease; leading to its degradation. Degradation by SpeB promotes bacterial translocation across the host epithelial barrier. Localized at tight junctions of both epithelial and endothelial cells. Highly expressed in kidney. Not detected in testis.

Its subcellular location is the cell membrane. It is found in the cell junction. The protein localises to the tight junction. May play a role in the formation and regulation of the tight junction (TJ) paracellular permeability barrier. It is able to induce adhesion when expressed in cells lacking tight junctions. Functionally, (Microbial infection) Acts as a coreceptor for hepatitis C virus (HCV) in hepatocytes. This is Occludin (OCLN) from Homo sapiens (Human).